A 290-amino-acid polypeptide reads, in one-letter code: Acetyl-coenzyme A carboxylase carboxyl transferase subunit beta (290 aa).

The CoA carboxyltransferase N-terminal domain maps to 28-290; sequence IMTKCPKCKK…TGGEYEWLQD (263 aa). Zn(2+) contacts are provided by Cys32, Cys35, Cys51, and Cys54. The C4-type zinc finger occupies 32 to 54; sequence CPKCKKIMLTKELDKNLRVCMNC.

It belongs to the AccD/PCCB family. As to quaternary structure, acetyl-CoA carboxylase is a heterohexamer composed of biotin carboxyl carrier protein (AccB), biotin carboxylase (AccC) and two subunits each of ACCase subunit alpha (AccA) and ACCase subunit beta (AccD). The cofactor is Zn(2+).

The protein resides in the cytoplasm. The catalysed reaction is N(6)-carboxybiotinyl-L-lysyl-[protein] + acetyl-CoA = N(6)-biotinyl-L-lysyl-[protein] + malonyl-CoA. The protein operates within lipid metabolism; malonyl-CoA biosynthesis; malonyl-CoA from acetyl-CoA: step 1/1. In terms of biological role, component of the acetyl coenzyme A carboxylase (ACC) complex. Biotin carboxylase (BC) catalyzes the carboxylation of biotin on its carrier protein (BCCP) and then the CO(2) group is transferred by the transcarboxylase to acetyl-CoA to form malonyl-CoA. The polypeptide is Acetyl-coenzyme A carboxylase carboxyl transferase subunit beta (Bacillus velezensis (strain DSM 23117 / BGSC 10A6 / LMG 26770 / FZB42) (Bacillus amyloliquefaciens subsp. plantarum)).